Reading from the N-terminus, the 49-residue chain is MRVNIQLACTECKRRNYATDKNKKNTTGRLELKKYCPWDKKHTVHRETK.

It belongs to the bacterial ribosomal protein bL33 family.

The polypeptide is Large ribosomal subunit protein bL33 (Nitratidesulfovibrio vulgaris (strain ATCC 29579 / DSM 644 / CCUG 34227 / NCIMB 8303 / VKM B-1760 / Hildenborough) (Desulfovibrio vulgaris)).